The following is a 132-amino-acid chain: DNA-directed RNA polymerase subunit omega (132 aa).

The segment at Val-100–Glu-119 is disordered.

This sequence belongs to the RNA polymerase subunit omega family. The RNAP catalytic core consists of 2 alpha, 1 beta, 1 beta' and 1 omega subunit. When a sigma factor is associated with the core the holoenzyme is formed, which can initiate transcription.

The catalysed reaction is RNA(n) + a ribonucleoside 5'-triphosphate = RNA(n+1) + diphosphate. In terms of biological role, promotes RNA polymerase assembly. Latches the N- and C-terminal regions of the beta' subunit thereby facilitating its interaction with the beta and alpha subunits. The chain is DNA-directed RNA polymerase subunit omega from Gluconacetobacter diazotrophicus (strain ATCC 49037 / DSM 5601 / CCUG 37298 / CIP 103539 / LMG 7603 / PAl5).